A 127-amino-acid polypeptide reads, in one-letter code: Fluoride-specific ion channel FluC (127 aa).

4 helical membrane passes run 4–24 (LLLAVFIGGGTGSVARWMLSM), 35–55 (LGTLAANLLGAFIIGMGFAWF), 71–91 (TGFCGGLTTFSTFSAEVVFLL), and 103–123 (VLVNLLGSFAMTALAFWIFSA). Na(+)-binding residues include Gly-75 and Thr-78.

The protein belongs to the fluoride channel Fluc/FEX (TC 1.A.43) family.

Its subcellular location is the cell inner membrane. The enzyme catalyses fluoride(in) = fluoride(out). Its activity is regulated as follows. Na(+) is not transported, but it plays an essential structural role and its presence is essential for fluoride channel function. In terms of biological role, fluoride-specific ion channel. Important for reducing fluoride concentration in the cell, thus reducing its toxicity. This Escherichia fergusonii (strain ATCC 35469 / DSM 13698 / CCUG 18766 / IAM 14443 / JCM 21226 / LMG 7866 / NBRC 102419 / NCTC 12128 / CDC 0568-73) protein is Fluoride-specific ion channel FluC.